We begin with the raw amino-acid sequence, 607 residues long: Protease Do-like 2, chloroplastic (607 aa).

The segment at 41–104 (SSNIKRKSSR…LSDFSRDQQT (64 aa)) is disordered. The span at 87–104 (PKKEKKESLSDFSRDQQT) shows a compositional bias: basic and acidic residues. The serine protease stretch occupies residues 118 to 317 (VVKVYCTHTA…LTDYERNGKY (200 aa)). Catalysis depends on charge relay system residues H159, D190, and S268. The region spanning 308-403 (LTDYERNGKY…YLISQKFAGD (96 aa)) is the PDZ domain.

This sequence belongs to the peptidase S1C family.

The protein localises to the plastid. It is found in the chloroplast thylakoid membrane. Serine protease that performs the primary cleavage of the photodamaged D1 protein in plant photosystem II. This Arabidopsis thaliana (Mouse-ear cress) protein is Protease Do-like 2, chloroplastic (DEGP2).